The following is a 1961-amino-acid chain: Ankyrin-3 (1961 aa).

Over residues 1–10 (MSEEPKEKPA) the composition is skewed to basic and acidic residues. The segment at 1 to 25 (MSEEPKEKPAKPAHRKRKGKKSDAN) is disordered. The span at 11–20 (KPAHRKRKGK) shows a compositional bias: basic residues. Phosphoserine is present on Ser22. 23 ANK repeats span residues 56 to 85 (NGLN…NVDA), 89 to 118 (KGNT…NVNA), 122 to 151 (NGFT…SQSL), 155 to 184 (DGFT…KGKV), 186 to 213 (LPAL…NADV), 217 to 246 (SGFT…AVDF), 250 to 279 (NDIT…KIDA), 283 to 312 (DGLT…PILS), 316 to 345 (NGLS…PVDD), 349 to 378 (DYLT…SPNA), 382 to 411 (NGFT…SIQA), 415 to 444 (SGLT…SPNT), 448 to 477 (RGET…QVEA), 481 to 510 (DDQT…SPNA), 514 to 543 (SGYT…SLSI), 547 to 576 (KGFT…SPDA), 580 to 609 (SGLT…SPHA), 613 to 642 (NGYT…DANA), 646 to 675 (QGIA…NVNL), 679 to 708 (SGLT…HVDA), 712 to 741 (MGYT…KVNA), 745 to 774 (NGYT…SPNE), and 778 to 807 (NGNT…EIMT). Ser606 bears the Phosphoserine mark. Residue Leu732 is modified to Phosphoserine. Phosphoserine occurs at positions 830, 844, 850, 873, 914, 917, 923, 958, 960, and 1114. ZU5 domains follow at residues 985–1140 (FLVS…VVSR) and 1142–1289 (KQES…LADC). The UPA domain stretch occupies residues 1274–1408 (VSFTTNVSAR…SIKIRDTSQE (135 aa)). Residues Ser1451, Ser1462, Ser1470, Ser1473, and Gly1560 each carry the phosphoserine modification. Residues 1478–1562 (TDIRMAIVAD…DIVTLLEGPI (85 aa)) form the Death domain. Disordered stretches follow at residues 1606-1678 (PNPF…DPLD), 1698-1740 (SVPG…VTED), 1784-1818 (WQNE…DQAR), 1844-1884 (PEAK…PVSP), and 1915-1961 (MTRT…KKTH). Over residues 1725–1740 (QQEKGKSGPDEEVTED) the composition is skewed to basic and acidic residues. Polar residues predominate over residues 1784–1795 (WQNETPSGSLES). Phosphoserine is present on residues Ser1795, Ser1813, and Ser1883. Positions 1808-1818 (DRLDDSSDQAR) are enriched in basic and acidic residues. Over residues 1933-1961 (GSTRSEPKQGEGYKVKTKKEIRNVEKKTH) the composition is skewed to basic and acidic residues.

As to quaternary structure, may be a constituent of a NFASC/NRCAM/ankyrin G complex. Interacts with RHBG. Directly interacts with DMD and betaDAG1; this interaction does not interfere with DMD-binding and is required for DMD and betaDAG1 retention at costameres. Interacts (via N-terminal ANK repeats) with SCHIP1 isoform 7 (via C-terminus); this interaction is required for the localization at axon initial segments (AISs) and nodes of Ranvier (NRs). Interacts with PLEC and FLNC. Interacts with KCNA1; this inhibits channel activity. Interacts with SCN5A. Interacts with PKP2 and GJA1/CX43. As to expression, expressed in many epithelial tissues, muscles and axons. Expressed in kidney, brain, skin, lung, liver, intestine, pancreas, heart and testis (at protein level). In testis, expressed in Leydig cells, but very weakly or not at all in Sertoli cells or seminiferous tubules. Expressed in macrophages (at protein level).

The protein resides in the cytoplasm. The protein localises to the cytoskeleton. It localises to the cell projection. It is found in the axon. Its subcellular location is the cell membrane. The protein resides in the sarcolemma. The protein localises to the postsynaptic cell membrane. It localises to the lysosome. It is found in the T-tubule. Membrane-cytoskeleton linker. May participate in the maintenance/targeting of ion channels and cell adhesion molecules at the nodes of Ranvier and axonal initial segments. In skeletal muscle, required for costamere localization of DMD and betaDAG1. Regulates KCNA1 channel activity in function of dietary Mg(2+) levels, and thereby contributes to the regulation of renal Mg(2+) reabsorption. Required for intracellular adhesion and junctional conductance in myocytes, potentially via stabilization of GJA1/CX43 protein abundance and promotion of PKP2, GJA1/CX43, and SCN5A/Nav1.5 localization to cell-cell junctions. The protein is Ankyrin-3 (Ank3) of Mus musculus (Mouse).